The chain runs to 393 residues: MASGRARCTRKLRNWVVEQVESGQFPGVCWDDTAKTMFRIPWKHAGKQDFREDQDAAFFKAWAIFKGKYKEGDTGGPAVWKTRLRCALNKSSEFKEVPERGRMDVAEPYKVYQLLPPGIVSGQPGTQKVPSKRQHSSVSSERKEEEDAMQNCTLSPSVLQDSLNNEEEGASGGAVHSDIGSSSSSSSPEPQEVTDTTEAPFQGDQRSLEFLLPPEPDYSLLLTFIYNGRVVGEAQVQSLDCRLVAEPSGSESSMEQVLFPKPGPLEPTQRLLSQLERGILVASNPRGLFVQRLCPIPISWNAPQAPPGPGPHLLPSNECVELFRTAYFCRDLVRYFQGLGPPPKFQVTLNFWEESHGSSHTPQNLITVKMEQAFARYLLEQTPEQQAAILSLV.

Positions 9–116 (TRKLRNWVVE…EPYKVYQLLP (108 aa)) form a DNA-binding region, IRF tryptophan pentad repeat. 2 disordered regions span residues 120-151 (VSGQ…AMQN) and 163-202 (LNNE…APFQ). S139 is subject to Phosphoserine.

Belongs to the IRF family. In terms of assembly, interacts with STAT2 in the cytoplasm. Forms the interferon-stimulated gene factor 3 complex (ISGF3) with the heterodimer STAT1:STAT2; upon stimulation. (Microbial infection) Interacts with measles virus V protein; this interaction prevents the binding of IRF9 to STAT2 and thereby the type I interferon signaling pathway. (Microbial infection) Ubiquitinated by Herpes simplex virus 2 E3 ubiquitin ligase ICP22.

The protein resides in the cytoplasm. It is found in the nucleus. Transcription factor that plays an essential role in anti-viral immunity. It mediates signaling by type I IFNs (IFN-alpha and IFN-beta). Following type I IFN binding to cell surface receptors, Jak kinases (TYK2 and JAK1) are activated, leading to tyrosine phosphorylation of STAT1 and STAT2. IRF9/ISGF3G associates with the phosphorylated STAT1:STAT2 dimer to form a complex termed ISGF3 transcription factor, that enters the nucleus. ISGF3 binds to the IFN stimulated response element (ISRE) to activate the transcription of interferon stimulated genes, which drive the cell in an antiviral state. This is Interferon regulatory factor 9 (IRF9) from Homo sapiens (Human).